Here is a 306-residue protein sequence, read N- to C-terminus: D-alanine--D-alanine ligase (306 aa).

The ATP-grasp domain maps to Lys-101 to Met-303. Val-134–Thr-189 is a binding site for ATP. 3 residues coordinate Mg(2+): Asp-257, Glu-270, and Asn-272.

The protein belongs to the D-alanine--D-alanine ligase family. Mg(2+) serves as cofactor. Requires Mn(2+) as cofactor.

The protein resides in the cytoplasm. The enzyme catalyses 2 D-alanine + ATP = D-alanyl-D-alanine + ADP + phosphate + H(+). It participates in cell wall biogenesis; peptidoglycan biosynthesis. Its function is as follows. Cell wall formation. The chain is D-alanine--D-alanine ligase from Yersinia pseudotuberculosis serotype O:1b (strain IP 31758).